Here is a 245-residue protein sequence, read N- to C-terminus: MDIFFVISGFLITGIIITEIQQNSFSLKQFYTRRIKRIYPAFITVMALVSFIASAIFIYNDFNKLRKTIELAIAFLSNFYLGLTQGYFDLSANENPVLHIWSLAVEGQYYLIFPLILILAYKKFREVKVLFIITLILFFILLATSFVSANFYKEVLHQPNIYYLSNLRFPELLVGSLLAIYHNLSNKVQLSKQVNNILAILSTLLLFSCLFLMNNNIAFIPGITLILPCIFTALIIHTTSQNNIR.

6 helical membrane-spanning segments follow: residues 38–58, 68–88, 100–120, 129–149, 194–214, and 217–237; these read IYPA…AIFI, TIEL…QGYF, IWSL…LILA, VLFI…FVSA, VNNI…FLMN, and IAFI…LIIH.

The protein belongs to the acyltransferase 3 family.

Its subcellular location is the cell membrane. This is an uncharacterized protein from Haemophilus influenzae (strain ATCC 51907 / DSM 11121 / KW20 / Rd).